Here is a 575-residue protein sequence, read N- to C-terminus: MIKRTLMLFLLLCSPLLTPAAANALFEQPGQNPYLPVDQAFMFDFQQKGDKLTLDWQIKPGYYLYHKQLHIEPQQATLGKITLPQGTAHRDEFFGETEVYFQQLIVNVPVTKANNNSNIVVTYQGCAAAGYCYPPETRLVPLSAVIPSKTTDAISAEPVHKTPESASNDQQHLPFSPLWAILIGIGIAFTPCVLPMYPLISSIILGSQRPKSLKQIFWLALSYVQGMAVTYTLLGLIVAAAGLQFQAALQHPYVLIGLSVLFILLALSMFGLYSLQLPSAVQTRLVNWSNQQKNGSLFGVFAMGALAGLICSPCTTAPLSAILLYIAQSGNTVAGGLTLYLYALGMGLPLIAVTLFGHKLLPRSGPWMQYVKEAFGFIILALPVFLLERVIGDAWGIRLWSLLAVSFLGWGFVLTIRSQNGWVRVIQLILLILMLIATRPLQDWFWGTTVTQQSQHSLNFRQINNWQELEQIMTQNSHKTVMLDFYADWCTACKEFEKYTFSDPQVQSQLGDTLLLQANVTNNSPQQKQLLEKLSVRGLPTILFFDSQGKEIPDSRVNGFMDATRFNEHLQHLPK.

The signal sequence occupies residues 1 to 24; it reads MIKRTLMLFLLLCSPLLTPAAANA. 2 disulfide bridges follow: Cys126–Cys132 and Cys192–Cys314. 8 helical membrane-spanning segments follow: residues 180-200, 216-236, 253-273, 297-317, 336-356, 367-387, 394-414, and 425-445; these read AILI…YPLI, IFWL…LLGL, YVLI…FGLY, LFGV…CTTA, GLTL…VTLF, WMQY…VFLL, AWGI…GFVL, and VIQL…QDWF. The 132-residue stretch at 444-575 folds into the Thioredoxin domain; the sequence is WFWGTTVTQQ…FNEHLQHLPK (132 aa). Cys490 and Cys493 form a disulfide bridge.

The protein belongs to the thioredoxin family. DsbD subfamily.

Its subcellular location is the cell inner membrane. The enzyme catalyses [protein]-dithiol + NAD(+) = [protein]-disulfide + NADH + H(+). It catalyses the reaction [protein]-dithiol + NADP(+) = [protein]-disulfide + NADPH + H(+). Its function is as follows. Required to facilitate the formation of correct disulfide bonds in some periplasmic proteins and for the assembly of the periplasmic c-type cytochromes. Acts by transferring electrons from cytoplasmic thioredoxin to the periplasm. This transfer involves a cascade of disulfide bond formation and reduction steps. This Photorhabdus laumondii subsp. laumondii (strain DSM 15139 / CIP 105565 / TT01) (Photorhabdus luminescens subsp. laumondii) protein is Thiol:disulfide interchange protein DsbD.